The sequence spans 340 residues: Geranylgeranyl pyrophosphate synthase atmG (340 aa).

Residues 19 to 48 (NLDASYPTSSSLSTEPIDTRSSSPQGSAST) are compositionally biased toward polar residues. Positions 19–51 (NLDASYPTSSSLSTEPIDTRSSSPQGSASTPVD) are disordered. Lys-69, Arg-72, and His-101 together coordinate isopentenyl diphosphate. Residues Asp-108 and Asp-112 each coordinate Mg(2+). Residue Arg-117 coordinates dimethylallyl diphosphate. Arg-118 contacts isopentenyl diphosphate. 3 residues coordinate dimethylallyl diphosphate: Lys-195, Thr-196, and Gln-229. Asp-232 lines the Mg(2+) pocket. 3 residues coordinate dimethylallyl diphosphate: Asn-236, Lys-246, and Lys-256.

It belongs to the FPP/GGPP synthase family. The cofactor is Mg(2+).

It catalyses the reaction isopentenyl diphosphate + dimethylallyl diphosphate = (2E)-geranyl diphosphate + diphosphate. It carries out the reaction isopentenyl diphosphate + (2E)-geranyl diphosphate = (2E,6E)-farnesyl diphosphate + diphosphate. The catalysed reaction is isopentenyl diphosphate + (2E,6E)-farnesyl diphosphate = (2E,6E,10E)-geranylgeranyl diphosphate + diphosphate. Functionally, geranylgeranyl pyrophosphate synthase; part of the ATM1 gene cluster that mediates the biosynthesis of aflatrem, a tremorgenic mycotoxin with acute neurotoxic effects. Synthesis of geranylgeranyl diphosphate (GGPP) by AtmG (a GGPP synthase) precedes condensation of GGPP with indole 3-glycerol phosphate, followed by epoxidation and cyclization by AtmM (a FAD-dependent monooxygenase) and AtmC (a prenyltransferase) to produce paspaline. AtmB is also essential for paspaline production, but its exact role has not been identified yet. AtmP, a cytochrome P450 monooxygenase, subsequently converts paspaline to 13-desoxypaxilline via PC-M6 by removal of the C-30 methyl group and oxidation at C-10. AtmQ, a cytochrome P450 monooxygenase, then catalyzes the oxidation of 13-desoxypaxilline, first at C-7 to produce paspalicine and then at C-13 to form paspalinine. Finally, AtmD prenylates paspalinine to form aflatrem. The protein is Geranylgeranyl pyrophosphate synthase atmG of Aspergillus flavus.